Here is a 152-residue protein sequence, read N- to C-terminus: Large ribosomal subunit protein bL9 (152 aa).

The protein belongs to the bacterial ribosomal protein bL9 family.

Its function is as follows. Binds to the 23S rRNA. This chain is Large ribosomal subunit protein bL9, found in Mycobacterium marinum (strain ATCC BAA-535 / M).